We begin with the raw amino-acid sequence, 407 residues long: Protein RecA (407 aa).

79 to 86 contacts ATP; sequence GPESSGKT. Residues 358–407 form a disordered region; it reads LSLEASPEESDAKTLRRXASRGAGASSSRVQEGSAANDHFQDESTTAKLL. Residues 377 to 386 show a composition bias toward low complexity; sequence SRGAGASSSR.

This sequence belongs to the RecA family.

The protein resides in the cytoplasm. Its function is as follows. Can catalyze the hydrolysis of ATP in the presence of single-stranded DNA, the ATP-dependent uptake of single-stranded DNA by duplex DNA, and the ATP-dependent hybridization of homologous single-stranded DNAs. It interacts with LexA causing its activation and leading to its autocatalytic cleavage. This Treponema pallidum (strain Nichols) protein is Protein RecA.